Reading from the N-terminus, the 58-residue chain is ATP synthase F(0) complex subunit k, mitochondrial (58 aa).

An N6-acetyllysine mark is found at lysine 16 and lysine 17. Residues threonine 23–phenylalanine 45 form a helical membrane-spanning segment.

Component of the ATP synthase complex composed at least of ATP5F1A/subunit alpha, ATP5F1B/subunit beta, ATP5MC1/subunit c (homooctomer), MT-ATP6/subunit a, MT-ATP8/subunit 8, ATP5ME/subunit e, ATP5MF/subunit f, ATP5MG/subunit g, ATP5MK/subunit k, ATP5MJ/subunit j, ATP5F1C/subunit gamma, ATP5F1D/subunit delta, ATP5F1E/subunit epsilon, ATP5PF/subunit F6, ATP5PB/subunit b, ATP5PD/subunit d, ATP5PO/subunit OSCP. ATP synthase complex consists of a soluble F(1) head domain (subunits alpha(3) and beta(3)) - the catalytic core - and a membrane F(0) domain - the membrane proton channel (subunits c, a, 8, e, f, g, k and j). These two domains are linked by a central stalk (subunits gamma, delta, and epsilon) rotating inside the F1 region and a stationary peripheral stalk (subunits F6, b, d, and OSCP). The ATP synthase complex/complex V exists as a monomeric and a dimeric supercomplex that helps shape mitochondrial cristae to optimize proton flow. In terms of tissue distribution, ubiquitous. Highly expressed in skeletal and cardiac muscle. Moderately expressed in brain, thymus, stomach and testis. Lowest expression levels were detected in lung, liver, kidney, adrenal gland, spleen, small intestine and adipose tissue. In streptozotocin-induced diabetes, the insulin-sensitive tissues skeletal and cardiac muscle were down-regulated.

It localises to the mitochondrion membrane. Subunit k, of the mitochondrial membrane ATP synthase complex (F(1)F(0) ATP synthase or Complex V) that produces ATP from ADP in the presence of a proton gradient across the membrane which is generated by electron transport complexes of the respiratory chain. ATP synthase complex consist of a soluble F(1) head domain - the catalytic core - and a membrane F(1) domain - the membrane proton channel. These two domains are linked by a central stalk rotating inside the F(1) region and a stationary peripheral stalk. During catalysis, ATP synthesis in the catalytic domain of F(1) is coupled via a rotary mechanism of the central stalk subunits to proton translocation. In vivo, can only synthesize ATP although its ATP hydrolase activity can be activated artificially in vitro. Part of the complex F(0) domain. Required for dimerization of the ATP synthase complex and as such regulates ATP synthesis in the mitochondria. This chain is ATP synthase F(0) complex subunit k, mitochondrial (Atp5mk), found in Rattus norvegicus (Rat).